Reading from the N-terminus, the 1412-residue chain is DNA-directed RNA polymerase subunit beta' (1412 aa).

Zn(2+) is bound by residues Cys-70, Cys-72, Cys-85, and Cys-88. Asp-460, Asp-462, and Asp-464 together coordinate Mg(2+). Residues Cys-819, Cys-893, Cys-900, and Cys-903 each contribute to the Zn(2+) site. Residues 1393-1412 (EAFEFGTPSAPAEEPQHPAE) are disordered.

This sequence belongs to the RNA polymerase beta' chain family. As to quaternary structure, the RNAP catalytic core consists of 2 alpha, 1 beta, 1 beta' and 1 omega subunit. When a sigma factor is associated with the core the holoenzyme is formed, which can initiate transcription. It depends on Mg(2+) as a cofactor. Requires Zn(2+) as cofactor.

The catalysed reaction is RNA(n) + a ribonucleoside 5'-triphosphate = RNA(n+1) + diphosphate. Its function is as follows. DNA-dependent RNA polymerase catalyzes the transcription of DNA into RNA using the four ribonucleoside triphosphates as substrates. This Burkholderia mallei (strain NCTC 10229) protein is DNA-directed RNA polymerase subunit beta'.